Reading from the N-terminus, the 502-residue chain is Probable mitochondrial-processing peptidase subunit alpha (502 aa).

Belongs to the peptidase M16 family. Heterodimer of mas2 (alpha) and mas1 (beta) subunits, forming the mitochondrial processing protease (MPP) in which mas2 is involved in substrate recognition and binding and mas1 is the catalytic subunit.

Its subcellular location is the mitochondrion matrix. In terms of biological role, substrate recognition and binding subunit of the essential mitochondrial processing protease (MPP), which cleaves the mitochondrial sequence off newly imported precursors proteins. The chain is Probable mitochondrial-processing peptidase subunit alpha (mas2) from Schizosaccharomyces pombe (strain 972 / ATCC 24843) (Fission yeast).